A 1382-amino-acid chain; its full sequence is Eukaryotic translation initiation factor 3 subunit A (1382 aa).

Lys-68 bears the N6-acetyllysine mark. Positions 82 to 120 (NIKSLEDVVRAYLKMAEEKTEAAKEESQQMVLDIEDLDN) form a coiled coil. Residues 315-498 (MQRMSTRVLL…RTLSFGSDLN (184 aa)) form the PCI domain. A phosphoserine mark is found at Ser-492 and Ser-584. The tract at residues 664 to 835 (LDPDFIMAKQ…REERERAERA (172 aa)) is interaction with EIF3B. Disordered regions lie at residues 810–844 (KEEE…LREY) and 866–1382 (EERE…TVRR). Basic and acidic residues-rich tracts occupy residues 866 to 1165 (EERE…DDSR), 1177 to 1328 (GWRE…DPPR), and 1336 to 1371 (SRDR…TKNE). Phosphoserine is present on residues Ser-881, Ser-882, and Ser-895. The stretch at 925 to 934 (DEDRSHRRDE) is repeat 1. Residues 925-1172 (DEDRSHRRDE…DSRPGPWRPL (248 aa)) are 25 X 10 AA approximate tandem repeats of [DE]-[DE]-[DE]-R-[SEVGFPILV]-[HPSN]-[RSW]-[RL]-[DRGTIHN]-[EPMANLGDT]. Residues 935 to 942 (ERPRRLGD) form a 2; truncated repeat. Repeat copies occupy residues 943 to 952 (DEDREPSLRP), 953 to 962 (DDDRVPRRGM), 963 to 972 (DDDRGPRRGP), 973 to 982 (EEDRFSRRGA), 983 to 992 (DDDRPSWRNT), 993 to 1002 (DDDRPPRRIA), 1003 to 1012 (DEDRGNWRHA), 1013 to 1022 (DDDRPPRRGL), 1023 to 1032 (DEDRGSWRTA), 1033 to 1042 (DEDRGPRRGM), 1043 to 1052 (DDDRGPRRGG), 1054 to 1063 (DDERSSWRNA), 1064 to 1073 (DDDRGPRRGL), 1074 to 1083 (DDDRGPRRGM), 1084 to 1093 (DDDRGPRRGM), 1094 to 1103 (DDDRGPRRGM), 1104 to 1113 (DDDRGPRRGL), 1114 to 1123 (DDDRGPWRNA), 1124 to 1133 (DDDRIPRRGA), and 1134 to 1143 (EDDRGPWRNM). Ser-949 carries the post-translational modification Phosphoserine. A Phosphoserine modification is found at Ser-1028. The stretch at 1144–1152 (DDDRLSRRA) is one 23; truncated repeat. Repeat 24 spans residues 1153–1162 (DDDRFPRRGD). The 25; approximate repeat unit spans residues 1163-1172 (DSRPGPWRPL). Residues Ser-1188, Ser-1198, Ser-1262, Ser-1336, and Ser-1364 each carry the phosphoserine modification.

Interacts with EIF4G1. Component of the eukaryotic translation initiation factor 3 (eIF-3) complex, which is composed of 13 subunits: EIF3A, EIF3B, EIF3C, EIF3D, EIF3E, EIF3F, EIF3G, EIF3H, EIF3I, EIF3J, EIF3K, EIF3L and EIF3M. The eIF-3 complex appears to include 3 stable modules: module A is composed of EIF3A, EIF3B, EIF3G and EIF3I; module B is composed of EIF3F, EIF3H, and EIF3M; and module C is composed of EIF3C, EIF3D, EIF3E, EIF3L and EIF3K. EIF3C of module C binds EIF3B of module A and EIF3H of module B, thereby linking the three modules. EIF3J is a labile subunit that binds to the eIF-3 complex via EIF3B. The eIF-3 complex interacts with RPS6KB1 under conditions of nutrient depletion. Mitogenic stimulation leads to binding and activation of a complex composed of MTOR and RPTOR, leading to phosphorylation and release of RPS6KB1 and binding of EIF4B to eIF-3. Also interacts with KRT7 and PIWIL2. Phosphorylated. Phosphorylation is enhanced upon serum stimulation.

The protein localises to the cytoplasm. In terms of biological role, RNA-binding component of the eukaryotic translation initiation factor 3 (eIF-3) complex, which is required for several steps in the initiation of protein synthesis. The eIF-3 complex associates with the 40S ribosome and facilitates the recruitment of eIF-1, eIF-1A, eIF-2:GTP:methionyl-tRNAi and eIF-5 to form the 43S pre-initiation complex (43S PIC). The eIF-3 complex stimulates mRNA recruitment to the 43S PIC and scanning of the mRNA for AUG recognition. The eIF-3 complex is also required for disassembly and recycling of post-termination ribosomal complexes and subsequently prevents premature joining of the 40S and 60S ribosomal subunits prior to initiation. The eIF-3 complex specifically targets and initiates translation of a subset of mRNAs involved in cell proliferation, including cell cycling, differentiation and apoptosis, and uses different modes of RNA stem-loop binding to exert either translational activation or repression. Its function is as follows. (Microbial infection) Essential for the initiation of translation on type-1 viral ribosomal entry sites (IRESs), like for HCV, PV, EV71 or BEV translation. Functionally, (Microbial infection) In case of FCV infection, plays a role in the ribosomal termination-reinitiation event leading to the translation of VP2. The polypeptide is Eukaryotic translation initiation factor 3 subunit A (Homo sapiens (Human)).